The sequence spans 216 residues: Large ribosomal subunit protein eL15 (216 aa).

Over residues 170–188 (RGLRKSKGFKGTVKHKWSR) the composition is skewed to basic residues. The interval 170-201 (RGLRKSKGFKGTVKHKWSRKQKEREEKKRHEA) is disordered. Residues 189–201 (KQKEREEKKRHEA) are compositionally biased toward basic and acidic residues.

It belongs to the eukaryotic ribosomal protein eL15 family.

This is Large ribosomal subunit protein eL15 from Saccharolobus islandicus (strain M.16.27) (Sulfolobus islandicus).